The chain runs to 155 residues: Large ribosomal subunit protein uL13 (155 aa).

The protein belongs to the universal ribosomal protein uL13 family. As to quaternary structure, part of the 50S ribosomal subunit.

In terms of biological role, this protein is one of the early assembly proteins of the 50S ribosomal subunit, although it is not seen to bind rRNA by itself. It is important during the early stages of 50S assembly. The protein is Large ribosomal subunit protein uL13 of Rickettsia typhi (strain ATCC VR-144 / Wilmington).